The following is a 390-amino-acid chain: Methylthioribose-1-phosphate isomerase (390 aa).

Residues 53–55 (RGA), arginine 90, and glutamine 207 each bind substrate. Aspartate 248 acts as the Proton donor in catalysis. 258-259 (NK) serves as a coordination point for substrate.

The protein belongs to the EIF-2B alpha/beta/delta subunits family. MtnA subfamily.

The enzyme catalyses 5-(methylsulfanyl)-alpha-D-ribose 1-phosphate = 5-(methylsulfanyl)-D-ribulose 1-phosphate. It catalyses the reaction 5-deoxy-alpha-D-ribose 1-phosphate = 5-deoxy-D-ribulose 1-phosphate. The protein operates within amino-acid biosynthesis; L-methionine biosynthesis via salvage pathway; L-methionine from S-methyl-5-thio-alpha-D-ribose 1-phosphate: step 1/6. Its function is as follows. Catalyzes the interconversion of methylthioribose-1-phosphate (MTR-1-P) into methylthioribulose-1-phosphate (MTRu-1-P). Also catalyzes the interconversion of 5-deoxyribose 1-phosphate and 5-deoxyribulose 1-phosphate. Part of a bifunctional DHAP-shunt salvage pathway for SAM by-products. The sequence is that of Methylthioribose-1-phosphate isomerase from Rhodospirillum rubrum (strain ATCC 11170 / ATH 1.1.1 / DSM 467 / LMG 4362 / NCIMB 8255 / S1).